The chain runs to 365 residues: Serpentine receptor class epsilon-21 (365 aa).

7 helical membrane passes run 49-69 (ILIN…VFCI), 82-102 (IIIS…FVFI), 116-136 (LLFW…HTLL), 158-178 (VWIA…YAFL), 189-209 (IFIV…IIYF), 250-270 (VVVV…PIIL), and 292-314 (PLVV…LSYY).

This sequence belongs to the nematode receptor-like protein sre family.

The protein resides in the membrane. In Caenorhabditis elegans, this protein is Serpentine receptor class epsilon-21 (sre-21).